The sequence spans 615 residues: 70 kDa neurofilament protein (615 aa).

The tract at residues 1–31 is disordered; that stretch reads MSVTQKKTEISTTTTYEGESRPSSGMSGFSY. The head stretch occupies residues 1 to 99; it reads MSVTQKKTEI…KANREREKQD (99 aa). Residues 21–30 show a composition bias toward polar residues; that stretch reads RPSSGMSGFS. Positions 96–449 constitute an IF rod domain; that stretch reads EKQDMRDLNE…KLLEGEESRV (354 aa). A coil 1A region spans residues 100-135; sequence MRDLNERFANYIEKVRFLEAQNKKLAGELEELKSKW. The linker 1 stretch occupies residues 136-145; that stretch reads GKETSAIKEM. Positions 146–284 are coil 1B; it reads YETELEEARK…VHAQELKELA (139 aa). Positions 285–303 are linker 12; it reads ALAYRDTTAENREFWRNEL. The segment at 304 to 449 is coil 2; the sequence is AQAIRDIQQE…KLLEGEESRV (146 aa). The interval 450–615 is tail; that stretch reads GMKQIVEQVV…ANYTQNTVYQ (166 aa). The region spanning 499-612 is the LTD domain; sequence AKTTYQRTSK…EDKANYTQNT (114 aa).

This sequence belongs to the intermediate filament family.

This is 70 kDa neurofilament protein from Doryteuthis pealeii (Longfin inshore squid).